Consider the following 115-residue polypeptide: T cell receptor beta variable 7-6 (115 aa).

An N-terminal signal peptide occupies residues 1–21; it reads MGTSLLCWVVLGFLGTDHTGA. Residues 22-115 enclose the Ig-like domain; it reads GVSQSPRYKV…SAMYRCASSL (94 aa). C42 and C111 are joined by a disulfide.

In terms of assembly, alpha-beta TR is a heterodimer composed of an alpha and beta chain; disulfide-linked. The alpha-beta TR is associated with the transmembrane signaling CD3 coreceptor proteins to form the TR-CD3 (TcR or TCR). The assembly of alpha-beta TR heterodimers with CD3 occurs in the endoplasmic reticulum where a single alpha-beta TR heterodimer associates with one CD3D-CD3E heterodimer, one CD3G-CD3E heterodimer and one CD247 homodimer forming a stable octameric structure. CD3D-CD3E and CD3G-CD3E heterodimers preferentially associate with TR alpha and TR beta chains, respectively. The association of the CD247 homodimer is the last step of TcR assembly in the endoplasmic reticulum and is required for transport to the cell surface.

The protein localises to the cell membrane. In terms of biological role, v region of the variable domain of T cell receptor (TR) beta chain that participates in the antigen recognition. Alpha-beta T cell receptors are antigen specific receptors which are essential to the immune response and are present on the cell surface of T lymphocytes. Recognize peptide-major histocompatibility (MH) (pMH) complexes that are displayed by antigen presenting cells (APC), a prerequisite for efficient T cell adaptive immunity against pathogens. Binding of alpha-beta TR to pMH complex initiates TR-CD3 clustering on the cell surface and intracellular activation of LCK that phosphorylates the ITAM motifs of CD3G, CD3D, CD3E and CD247 enabling the recruitment of ZAP70. In turn ZAP70 phosphorylates LAT, which recruits numerous signaling molecules to form the LAT signalosome. The LAT signalosome propagates signal branching to three major signaling pathways, the calcium, the mitogen-activated protein kinase (MAPK) kinase and the nuclear factor NF-kappa-B (NF-kB) pathways, leading to the mobilization of transcription factors that are critical for gene expression and essential for T cell growth and differentiation. The T cell repertoire is generated in the thymus, by V-(D)-J rearrangement. This repertoire is then shaped by intrathymic selection events to generate a peripheral T cell pool of self-MH restricted, non-autoaggressive T cells. Post-thymic interaction of alpha-beta TR with the pMH complexes shapes TR structural and functional avidity. The polypeptide is T cell receptor beta variable 7-6 (Homo sapiens (Human)).